The following is a 103-amino-acid chain: Small ribosomal subunit protein uS10 (103 aa).

Belongs to the universal ribosomal protein uS10 family. In terms of assembly, part of the 30S ribosomal subunit.

Functionally, involved in the binding of tRNA to the ribosomes. The sequence is that of Small ribosomal subunit protein uS10 from Syntrophobacter fumaroxidans (strain DSM 10017 / MPOB).